A 946-amino-acid polypeptide reads, in one-letter code: Protein translocase subunit SecA (946 aa).

Residues Q90, G108–T112, and D509 contribute to the ATP site.

Belongs to the SecA family. In terms of assembly, monomer and homodimer. Part of the essential Sec protein translocation apparatus which comprises SecA, SecYEG and auxiliary proteins SecDF. Other proteins may also be involved.

It is found in the cell inner membrane. The protein resides in the cellular thylakoid membrane. It localises to the cytoplasm. It catalyses the reaction ATP + H2O + cellular proteinSide 1 = ADP + phosphate + cellular proteinSide 2.. Part of the Sec protein translocase complex. Interacts with the SecYEG preprotein conducting channel. Has a central role in coupling the hydrolysis of ATP to the transfer of proteins into and across the cell membrane, serving as an ATP-driven molecular motor driving the stepwise translocation of polypeptide chains across the membrane. Its function is as follows. Probably participates in protein translocation into and across both the cytoplasmic and thylakoid membranes in cyanobacterial cells. The polypeptide is Protein translocase subunit SecA (Synechococcus sp. (strain RCC307)).